We begin with the raw amino-acid sequence, 215 residues long: Cytochrome b6 (215 aa).

The chain crosses the membrane as a helical span at residues I32–F52. C35 is a binding site for heme c. Heme b-binding residues include H86 and H100. 3 helical membrane-spanning segments follow: residues A90–F110, L116–Y136, and L186–I206. H187 and H202 together coordinate heme b.

It belongs to the cytochrome b family. PetB subfamily. As to quaternary structure, the 4 large subunits of the cytochrome b6-f complex are cytochrome b6, subunit IV (17 kDa polypeptide, PetD), cytochrome f and the Rieske protein, while the 4 small subunits are PetG, PetL, PetM and PetN. The complex functions as a dimer. Heme b serves as cofactor. Requires heme c as cofactor.

The protein localises to the plastid. It localises to the chloroplast thylakoid membrane. In terms of biological role, component of the cytochrome b6-f complex, which mediates electron transfer between photosystem II (PSII) and photosystem I (PSI), cyclic electron flow around PSI, and state transitions. This chain is Cytochrome b6, found in Coleochaete orbicularis (Charophycean green alga).